The sequence spans 437 residues: Glutamyl-tRNA reductase (437 aa).

Residues 49-52, serine 109, 114-116, and glutamine 120 each bind substrate; these read TCNR and EVQ. Cysteine 50 functions as the Nucleophile in the catalytic mechanism. An NADP(+)-binding site is contributed by 189-194; sequence GAGDTA.

Belongs to the glutamyl-tRNA reductase family. Homodimer.

The enzyme catalyses (S)-4-amino-5-oxopentanoate + tRNA(Glu) + NADP(+) = L-glutamyl-tRNA(Glu) + NADPH + H(+). It participates in porphyrin-containing compound metabolism; protoporphyrin-IX biosynthesis; 5-aminolevulinate from L-glutamyl-tRNA(Glu): step 1/2. Its pathway is porphyrin-containing compound metabolism; chlorophyll biosynthesis. In terms of biological role, catalyzes the NADPH-dependent reduction of glutamyl-tRNA(Glu) to glutamate 1-semialdehyde (GSA). In Chloroherpeton thalassium (strain ATCC 35110 / GB-78), this protein is Glutamyl-tRNA reductase.